The sequence spans 671 residues: Acetyl-coenzyme A synthetase (671 aa).

The disordered stretch occupies residues 1–21 (MPTASASESSSNQPESSNASG). Residues 221–224 (RRGK), threonine 339, and asparagine 363 each bind CoA. ATP-binding positions include 415–417 (GEG), 439–444 (DTWWQT), aspartate 528, and arginine 543. A CoA-binding site is contributed by serine 551. Arginine 554 provides a ligand contact to ATP. Mg(2+) is bound by residues valine 565, histidine 567, and valine 570. Residue arginine 611 participates in CoA binding. Residue lysine 636 is modified to N6-acetyllysine.

This sequence belongs to the ATP-dependent AMP-binding enzyme family. It depends on Mg(2+) as a cofactor. Acetylated. Deacetylation by the SIR2-homolog deacetylase activates the enzyme.

The enzyme catalyses acetate + ATP + CoA = acetyl-CoA + AMP + diphosphate. In terms of biological role, catalyzes the conversion of acetate into acetyl-CoA (AcCoA), an essential intermediate at the junction of anabolic and catabolic pathways. AcsA undergoes a two-step reaction. In the first half reaction, AcsA combines acetate with ATP to form acetyl-adenylate (AcAMP) intermediate. In the second half reaction, it can then transfer the acetyl group from AcAMP to the sulfhydryl group of CoA, forming the product AcCoA. In Rhodopirellula baltica (strain DSM 10527 / NCIMB 13988 / SH1), this protein is Acetyl-coenzyme A synthetase.